We begin with the raw amino-acid sequence, 359 residues long: HTH-type transcriptional regulator Rv3575c (359 aa).

The 56-residue stretch at Ala-9 to Thr-64 folds into the HTH lacI-type domain. Residues Leu-11–Asn-30 constitute a DNA-binding region (H-T-H motif).

Its function is as follows. Transcriptional regulator that negatively regulates transcription of the mce4 operon, which is involved in cholesterol transport and utilization. Acts by binding to the promoter region of the mce4 operon. It affects the utilization of host cholesterol as a carbon source, impacting the host's innate immune response. In Mycobacterium tuberculosis (strain ATCC 25618 / H37Rv), this protein is HTH-type transcriptional regulator Rv3575c.